A 461-amino-acid chain; its full sequence is Glycolipid 2-alpha-mannosyltransferase 2 (461 aa).

Topologically, residues 1 to 12 (MKPSIFYSSRQP) are cytoplasmic. The chain crosses the membrane as a helical; Signal-anchor for type II membrane protein span at residues 13-35 (YLKYLAIILTTITIYVLTHSSYS). Positions 35 to 52 (SADPNINDVTTKPISETV) are enriched in polar residues. The interval 35–138 (SADPNINDVT…SSSKDPVKPE (104 aa)) is disordered. The Lumenal segment spans residues 36-461 (ADPNINDVTT…QKPKEWEKYQ (426 aa)). Composition is skewed to low complexity over residues 61 to 70 (SSPEQQQQQP) and 106 to 116 (PKSSSSSPQQQ). Basic and acidic residues predominate over residues 117–126 (EKQDTKKESE). Residue Glu349 is the Nucleophile of the active site.

The protein belongs to the glycosyltransferase 15 family.

The protein localises to the golgi apparatus membrane. Functionally, involved in O-glycosylation of cell wall and secreted proteins. Transfers an alpha-D-mannosyl residue from GDP-mannose into lipid-linked oligosaccharide, forming an alpha-(1-&gt;2)-D-mannosyl-D-mannose linkage. Mainly responsible for the addition of the third mannose residue in an O-linked mannose pentamer. Can also substitute for MNT1 by adding the second mannose residue. Important for adherence to host surfaces and for virulence. This chain is Glycolipid 2-alpha-mannosyltransferase 2 (MNT2), found in Candida albicans (strain SC5314 / ATCC MYA-2876) (Yeast).